The following is a 102-amino-acid chain: Urease subunit beta (102 aa).

The protein belongs to the urease beta subunit family. In terms of assembly, heterotrimer of UreA (gamma), UreB (beta) and UreC (alpha) subunits. Three heterotrimers associate to form the active enzyme.

Its subcellular location is the cytoplasm. The catalysed reaction is urea + 2 H2O + H(+) = hydrogencarbonate + 2 NH4(+). It functions in the pathway nitrogen metabolism; urea degradation; CO(2) and NH(3) from urea (urease route): step 1/1. The chain is Urease subunit beta from Opitutus terrae (strain DSM 11246 / JCM 15787 / PB90-1).